We begin with the raw amino-acid sequence, 70 residues long: Beta-defensin 43 (70 aa).

The first 22 residues, 1–22, serve as a signal peptide directing secretion; sequence MRLLLSILGVLTLLSILPLARS. Cystine bridges form between C29/C57 and C36/C50.

Belongs to the beta-defensin family.

The protein localises to the secreted. In terms of biological role, has bactericidal activity. The chain is Beta-defensin 43 (Defb43) from Rattus norvegicus (Rat).